The sequence spans 306 residues: Curved DNA-binding protein (306 aa).

Positions 5–69 constitute a J domain; the sequence is DYYAIMGVKP…QRRAEYDQMW (65 aa).

The protein localises to the cytoplasm. It is found in the nucleoid. DNA-binding protein that preferentially recognizes a curved DNA sequence. It is probably a functional analog of DnaJ; displays overlapping activities with DnaJ, but functions under different conditions, probably acting as a molecular chaperone in an adaptive response to environmental stresses other than heat shock. Lacks autonomous chaperone activity; binds native substrates and targets them for recognition by DnaK. Its activity is inhibited by the binding of CbpM. The sequence is that of Curved DNA-binding protein from Shigella dysenteriae serotype 1 (strain Sd197).